The following is an 808-amino-acid chain: Genome polyprotein (808 aa).

The disordered stretch occupies residues 34-55; the sequence is TAEVGSHQPEPLKTSVDKPGSK. 2 consecutive short sequence motifs ((L)YPX(n)L motif) follow at residues 146 to 150 and 179 to 184; these read YPHGL and YPVWEL.

This sequence belongs to the picornaviridae polyprotein family. In terms of assembly, homopentamer. Homooligomer. Interacts with capsid protein VP2. Interacts with capsid protein VP3. As to quaternary structure, interacts with capsid protein VP1. Interacts with capsid protein VP3. In terms of assembly, interacts with capsid protein VP1. Interacts with capsid protein VP2. Post-translationally, specific enzymatic cleavages by viral protease in vivo yield a variety of precursors and mature proteins. Polyprotein processing intermediates are produced, such as P1-2A which is a functional precursor of the structural proteins, VP0 which is a VP4-VP2 precursor, VP1-2A precursor, 3ABC precursor which is a stable and catalytically active precursor of 3A, 3B and 3C proteins, 3AB and 3CD precursors. The assembly signal 2A is removed from VP1-2A by a host protease, possibly host Cathepsin L. This cleavage occurs over a region of 3 amino-acids probably generating VP1 proteins with heterogeneous C-termini. In terms of processing, during virion maturation, immature virions are rendered infectious following cleavage of VP0 into VP4 and VP2. This maturation seems to be an autocatalytic event triggered by the presence of RNA in the capsid and is followed by a conformational change of the particle. The assembly signal 2A is removed from VP1-2A by a host protease, possibly host Cathepsin L in naked virions. This cleavage does not occur in enveloped virions. This cleavage occurs over a region of 3 amino-acids probably generating VP1 proteins with heterogeneous C-termini. Post-translationally, unlike other picornaviruses, does not seem to be myristoylated.

It localises to the virion. Its subcellular location is the host endosome. The protein resides in the host multivesicular body. In terms of biological role, capsid proteins VP1, VP2, and VP3 form a closed capsid enclosing the viral positive strand RNA genome. All these proteins contain a beta-sheet structure called beta-barrel jelly roll. Together they form an icosahedral capsid (T=3) composed of 60 copies of each VP1, VP2, and VP3, with a diameter of approximately 300 Angstroms. VP1 is situated at the 12 fivefold axes, whereas VP2 and VP3 are located at the quasi-sixfold axes. The naked capsid interacts with the host receptor HAVCR1 to provide virion attachment to and probably entry into the target cell. VP0 precursor is a component of the immature procapsids. Its function is as follows. Plays a role in the assembly of the 12 pentamers into an icosahedral structure. Has not been detected in mature virions, supposedly owing to its small size. Functionally, precursor component of immature procapsids that corresponds to an extended form of the structural protein VP1. After maturation, possibly by the host Cathepsin L, the assembly signal 2A is cleaved to give rise to the mature VP1 protein. This Human hepatitis A virus genotype IIIA (isolate GA76) (HHAV) protein is Genome polyprotein.